The primary structure comprises 768 residues: Vacuolar basic amino acid transporter 4 (768 aa).

Topologically, residues 1 to 252 (MGKKDRQRKK…HDLTRRRIFS (252 aa)) are cytoplasmic. A coiled-coil region spans residues 9–40 (KKLREFAKLKNRQRNLRKSVQTLKNEVQREAK). The disordered stretch occupies residues 34–172 (EVQREAKVPR…ELPVSSSNSF (139 aa)). Residues serine 62, serine 99, and serine 106 each carry the phosphoserine modification. Residues 110-121 (KPADKANEDDLK) show a composition bias toward basic and acidic residues. Over residues 132–159 (SALQSSITDFSDRSVSPLQSITSCNTPM) the composition is skewed to polar residues. Phosphoserine occurs at positions 160 and 192. A helical transmembrane segment spans residues 253 to 273 (SCMCTYLFFIAMDSSIILVIA). Topologically, residues 274–282 (SKIASEFHE) are vacuolar. A helical membrane pass occupies residues 283 to 305 (LWRLSLVISAYLLSNAIGQLVFL). At 306–311 (KLSLIS) the chain is on the cytoplasmic side. Residues 312-331 (SVKLLLCIAQFSFILGGYLS) traverse the membrane as a helical segment. Over 332-334 (WSS) the chain is Vacuolar. The helical transmembrane segment at 335-357 (AHFWTFIFARCVTGFGGGSLIAL) threads the bilayer. At 358-375 (KSTIMNRFSQKNDSRYSL) the chain is on the cytoplasmic side. Residues 376–396 (SASMITFAMGVVIGPFMMNLF) form a helical membrane-spanning segment. The Vacuolar segment spans residues 397–406 (DSSHGSGWRN). Residues 407 to 427 (AFLIPVPFCLVNASIMLADMY) traverse the membrane as a helical segment. Topologically, residues 428-447 (SVKSTLYGRPTPTLWKRFKN) are cytoplasmic. Residues 448–468 (TLLSPDLYEILTLTLFLLCFV) form a helical membrane-spanning segment. At 469-481 (QVTSLDLTGLKNN) the chain is on the vacuolar side. An N-linked (GlcNAc...) asparagine glycan is attached at asparagine 480. The helical transmembrane segment at 482-502 (TMIQALLFSVIIVCGILFFLI) threads the bilayer. At 503 to 522 (ETSDTYMNSVISMSLQGDKR) the chain is on the cytoplasmic side. The helical transmembrane segment at 523 to 543 (LIWTMIGISFCFAALMCIIPF) threads the bilayer. At 544 to 562 (GTTYFIIVLNLSTLQLAER) the chain is on the vacuolar side. Asparagine 553 carries N-linked (GlcNAc...) asparagine glycosylation. The chain crosses the membrane as a helical span at residues 563–583 (LSPFFFSIVLGYFSVSYFWKS). Over 584 to 587 (KGQN) the chain is Cytoplasmic. Residues 588–608 (FLLKFVLSGATLLLYVALMGV) traverse the membrane as a helical segment. Residues 609–617 (SLNLPVWKQ) lie on the Vacuolar side of the membrane. A helical membrane pass occupies residues 618–638 (YICLSLPFLGSSMILTLLSNL). Residues 639-653 (YHEYHEQRKSPISGS) lie on the Cytoplasmic side of the membrane. Residues 654–674 (IVYCFGAVGGTVGISLGGYVF) traverse the membrane as a helical segment. At 675 to 734 (HKTLIKLMHEKVMPFSKQGYLKKDLLKIIKHATESSDWVHESAPKFVFQTLIECYLQACR) the chain is on the vacuolar side. A helical transmembrane segment spans residues 735-755 (NVFKLSTLFFTITVVAIFIFN). The Cytoplasmic portion of the chain corresponds to 756–768 (RIHCRSQNCLSLS).

This sequence belongs to the major facilitator superfamily.

Its subcellular location is the vacuole membrane. Transporter required for vacuolar uptake of basic amino acids. The sequence is that of Vacuolar basic amino acid transporter 4 (VBA4) from Saccharomyces cerevisiae (strain ATCC 204508 / S288c) (Baker's yeast).